Here is a 426-residue protein sequence, read N- to C-terminus: MGFDFKLKISNASQLVVISKGKPFLIGKEMSNIEIIENGTMIIDENGIIFDIGTFKEMEEKYKDKSFEKVLDCTGKSVLPGFVDGHTHPVFSGDRVHEFAMKLAGATYLDVHKAGGGIQFTISHTKNSTEDELYQLLIPRLNRMLKNGTTLIEAKSGYGLETETEMKMLKVLDRASKQFQGVEIVSTYLGGHAIPKGMNASEATDDIINKQIPELKRLKDAGEISPANIDVFLEKGFFEYEDTKRILQAGKDIGLECNFHGDELSYMKSGELAGELGCRAISHLEKVSEDGMKAMAATPTFAVLLPTTAYILRLECPPARRMIELGVPVALGSDFNPNAHCLSMPFVMNLACVLMKMNMNESLVAATLNAAASINKSSTHGSLEVGKFADFVILSADKWEHIIYEMVDPPISHVFKKGNLVFSNNN.

4-imidazolone-5-propanoate is bound by residues Tyr-158 and His-192. Tyr-158 lines the N-formimidoyl-L-glutamate pocket. His-260 is a Fe(3+) binding site. Position 260 (His-260) interacts with Zn(2+). Residue Glu-263 participates in 4-imidazolone-5-propanoate binding. A Fe(3+)-binding site is contributed by Asp-334. Asp-334 is a Zn(2+) binding site. Residue Asn-336 participates in N-formimidoyl-L-glutamate binding.

It belongs to the metallo-dependent hydrolases superfamily. HutI family. Zn(2+) serves as cofactor. It depends on Fe(3+) as a cofactor.

The catalysed reaction is 4-imidazolone-5-propanoate + H2O = N-formimidoyl-L-glutamate. It functions in the pathway amino-acid degradation; L-histidine degradation into L-glutamate; N-formimidoyl-L-glutamate from L-histidine: step 3/3. This is Probable imidazolonepropionase (amdhd1) from Dictyostelium discoideum (Social amoeba).